We begin with the raw amino-acid sequence, 451 residues long: Phosphoglucosamine mutase (451 aa).

The active-site Phosphoserine intermediate is the S102. Mg(2+)-binding residues include S102, D243, D245, and D247. S102 carries the phosphoserine modification.

The protein belongs to the phosphohexose mutase family. Mg(2+) is required as a cofactor. In terms of processing, activated by phosphorylation.

It carries out the reaction alpha-D-glucosamine 1-phosphate = D-glucosamine 6-phosphate. Its function is as follows. Catalyzes the conversion of glucosamine-6-phosphate to glucosamine-1-phosphate. The protein is Phosphoglucosamine mutase of Brucella canis (strain ATCC 23365 / NCTC 10854 / RM-666).